The chain runs to 316 residues: Transaldolase (316 aa).

K132 acts as the Schiff-base intermediate with substrate in catalysis.

This sequence belongs to the transaldolase family. Type 1 subfamily. Homodimer.

Its subcellular location is the cytoplasm. It catalyses the reaction D-sedoheptulose 7-phosphate + D-glyceraldehyde 3-phosphate = D-erythrose 4-phosphate + beta-D-fructose 6-phosphate. It functions in the pathway carbohydrate degradation; pentose phosphate pathway; D-glyceraldehyde 3-phosphate and beta-D-fructose 6-phosphate from D-ribose 5-phosphate and D-xylulose 5-phosphate (non-oxidative stage): step 2/3. In terms of biological role, transaldolase is important for the balance of metabolites in the pentose-phosphate pathway. The sequence is that of Transaldolase from Vibrio vulnificus (strain CMCP6).